The following is a 221-amino-acid chain: UPF0319 protein CGSHiGG_02140 (221 aa).

The first 21 residues, Met1–Ala21, serve as a signal peptide directing secretion.

This sequence belongs to the UPF0319 family.

In Haemophilus influenzae (strain PittGG), this protein is UPF0319 protein CGSHiGG_02140.